The sequence spans 265 residues: Shikimate dehydrogenase (NADP(+)) (265 aa).

Shikimate-binding positions include 15–17 and threonine 62; that span reads SKS. Residue lysine 66 is the Proton acceptor of the active site. Shikimate-binding residues include asparagine 87 and aspartate 102. NADP(+) contacts are provided by residues 127–131, 151–156, and methionine 212; these read GAGGA and NRTVSR. Tyrosine 214 contacts shikimate. Residue glycine 234 participates in NADP(+) binding.

It belongs to the shikimate dehydrogenase family. Homodimer.

It catalyses the reaction shikimate + NADP(+) = 3-dehydroshikimate + NADPH + H(+). Its pathway is metabolic intermediate biosynthesis; chorismate biosynthesis; chorismate from D-erythrose 4-phosphate and phosphoenolpyruvate: step 4/7. In terms of biological role, involved in the biosynthesis of the chorismate, which leads to the biosynthesis of aromatic amino acids. Catalyzes the reversible NADPH linked reduction of 3-dehydroshikimate (DHSA) to yield shikimate (SA). This is Shikimate dehydrogenase (NADP(+)) from Thiobacillus denitrificans (strain ATCC 25259 / T1).